The sequence spans 457 residues: Elongation factor 1-alpha (457 aa).

At glycine 2 the chain carries N,N,N-trimethylglycine. Lysine 3 carries the post-translational modification N6,N6-dimethyllysine; alternate. Position 3 is an N6-methyllysine; alternate (lysine 3). Positions 5–240 (KTHVNVVVIG…DAIEPPVRPS (236 aa)) constitute a tr-type G domain. The interval 14–21 (GHVDSGKS) is G1. 14-21 (GHVDSGKS) is a binding site for GTP. Lysine 30 carries the N6-methyllysine modification. A G2 region spans residues 70 to 74 (GITID). Lysine 79 is modified (N6,N6,N6-trimethyllysine). Residues 91 to 94 (DAPG) form a G3 region. Residues 91-95 (DAPGH) and 153-156 (NKMD) each bind GTP. Residues 153-156 (NKMD) are G4. Residues 192-194 (SGW) form a G5 region. N6,N6-dimethyllysine; alternate is present on lysine 316. Residue lysine 316 is modified to N6-methyllysine; alternate. Position 389 is an N6-methyllysine (lysine 389).

This sequence belongs to the TRAFAC class translation factor GTPase superfamily. Classic translation factor GTPase family. EF-Tu/EF-1A subfamily.

It is found in the cytoplasm. In terms of biological role, this protein promotes the GTP-dependent binding of aminoacyl-tRNA to the A-site of ribosomes during protein biosynthesis. The chain is Elongation factor 1-alpha (TEF-3) from Mucor circinelloides f. lusitanicus (Mucor racemosus var. lusitanicus).